A 224-amino-acid chain; its full sequence is Probable GTP-binding protein EngB (224 aa).

The EngB-type G domain maps to 31–205 (IGVEIAFAGR…LSILNDWCHP (175 aa)). Residues 39-46 (GRSNAGKS), 66-70 (GRTQL), 84-87 (DLPG), 151-154 (TKSD), and 184-186 (LSS) each bind GTP. Residues Ser46 and Thr68 each contribute to the Mg(2+) site.

This sequence belongs to the TRAFAC class TrmE-Era-EngA-EngB-Septin-like GTPase superfamily. EngB GTPase family. Mg(2+) is required as a cofactor.

Its function is as follows. Necessary for normal cell division and for the maintenance of normal septation. The protein is Probable GTP-binding protein EngB of Shewanella frigidimarina (strain NCIMB 400).